The primary structure comprises 43 residues: ORF7b protein (43 aa).

The chain crosses the membrane as a helical span at residues phenylalanine 9–tryptophan 29.

Its subcellular location is the host Golgi apparatus membrane. It is found in the host endosome membrane. This is ORF7b protein from Homo sapiens (Human).